We begin with the raw amino-acid sequence, 688 residues long: G-protein coupled receptor-associated protein LMBRD2 (688 aa).

Residues 1 to 3 (MSG) are Extracellular-facing. Residues 4 to 21 (AALGLEIVFVFFLALFLL) form a helical membrane-spanning segment. Residues 22–32 (HRYGDFKKQHR) lie on the Cytoplasmic side of the membrane. Residues 33–53 (LVIIATLLAWYLCFLIVFILP) form a helical membrane-spanning segment. The Extracellular segment spans residues 54-99 (LDVSTTIYNRCKLAVNSSPAESNSSFVTLAPSKQQCFKPWSYIPNG). N-linked (GlcNAc...) asparagine glycosylation occurs at Asn76. Residues 100–120 (IMPIFWRVVYWTSQFLTWILL) form a helical membrane-spanning segment. Over 121 to 144 (PFMQSYARSGGFSITGKIKTALIE) the chain is Cytoplasmic. Residues 145 to 165 (NAIYYGTYLLIFGAFLIYVAV) form a helical membrane-spanning segment. The Extracellular segment spans residues 166-180 (NPKFNLQWNQLQTIG). Residues 181–201 (IAAANTWGLFLLVLLLGYGLV) traverse the membrane as a helical segment. Residues 202–381 (EIPRSHWNGA…ECLLRPWFYR (180 aa)) lie on the Cytoplasmic side of the membrane. Residues 222-254 (FKAAKLMTEKADAEENLEDIMEEVRKVSESIKY) are a coiled coil. The helical transmembrane segment at 382–402 (VLAVVLAAFSVIVVWSECTFF) threads the bilayer. Over 403–426 (STRPVLSLVAVFIQLAEKTYNYIY) the chain is Extracellular. A helical transmembrane segment spans residues 427–447 (IEMACFLTIFFLSICVYSTVF). At 448–467 (RIRVFNYYYLASHHQTDAYS) the chain is on the cytoplasmic side. The chain crosses the membrane as a helical span at residues 468–488 (LLFSGMLFCRLTPPLCLNFLG). Residues 489 to 515 (LTHMDATISHTDAQPTAYTSIMGSMKV) lie on the Extracellular side of the membrane. The helical transmembrane segment at 516-536 (LSFIADGFYIYYPMLVVILCI) threads the bilayer. At 537 to 688 (ATYFSLGTRC…MSRSRIFEDV (152 aa)) the chain is on the cytoplasmic side. Residues 600–617 (REDSTRNRVVHTEQKESS) show a composition bias toward basic and acidic residues. A disordered region spans residues 600 to 673 (REDSTRNRVV…ESDSGRYQPG (74 aa)). Polar residues predominate over residues 618-634 (FSETNTNRPLSKYTRTN). A compositionally biased stretch (basic and acidic residues) spans 635 to 644 (GRTERDRIEL).

The protein belongs to the LIMR family.

Its subcellular location is the cell membrane. Functionally, may associate with G-protein coupled receptors and regulate downstream signaling pathways. The chain is G-protein coupled receptor-associated protein LMBRD2 from Gallus gallus (Chicken).